Reading from the N-terminus, the 436-residue chain is MTSVPIFESVSRFLPPANEDEQYWWKITGQHMARMMHEAGYPEDRQVECLLFHRFKVIPCLGPRPRSDTPWYKSRVGGGAADGCPINYSWRFGTADRKPHIRNFIEPLGALTNTPADPLNEVATKALLQDYSMTLPNVDLEAFWTFAPHYRPRIIEKADIEKLAGASLLVGAEMSPDSHTIDIKAYMYPRVPSQTSQLLTTILPQAMRDAYGENVCLDSLNFVHEFMTKDPQGSQLVLTGTTGIDCCKLQDTRVKIYVITRNTSFDHIAAIMTLGGRRPISEELLGQLKALWYELKGAPAELPSSEQLPVQTKPDGSKNPIVVPFYFDIQPRLALPDVKAYIDVSTSPVSDLAAANAVVRHLEQHGSGQNPKAYLNVLKDITPVEELETQKGVLAFYSVAVKKNELDITSYFNPQVYKRYFAHEVHLNGQRRSVFE.

It belongs to the tryptophan dimethylallyltransferase family.

The protein operates within secondary metabolite biosynthesis. Functionally, prenyltransferase; part of the gene cluster that mediates the biosynthesis of neosartoricin B, a prenylated anthracenone that probably exhibits T-cell antiproliferative activity, suggestive of a physiological role as an immunosuppressive agent. The non-reducing polyketide synthase nscA probably synthesizes and cyclizes the decaketide backbone. The hydrolase nscB then mediates the product release through hydrolysis followed by spontaneous decarboxylation. The prenyltransferase nscD catalyzes the addition of the dimethylallyl group to the aromatic C5. The FAD-dependent monooxygenase nscC is then responsible for the stereospecific hydroxylation at C2. Neosartoricin B can be converted into two additional compounds neosartoricins C and D. Neosartoricin C is a spirocyclic compound that is cyclized through the attack of C3 hydroxyl on C14, followed by dehydration. On the other hand, neosartoricin D is a further cyclized compound in which attack of C2 on C14 in neosartoricin C results in the formation of the acetal-containing dioxabicyclo-octanone ring. Both of these compounds are novel and possibly represent related metabolites of the gene cluster. The protein is Prenyltransferase nscD of Trichophyton equinum (strain ATCC MYA-4606 / CBS 127.97) (Horse ringworm fungus).